The sequence spans 274 residues: Chemotaxis protein methyltransferase 1 (274 aa).

Positions 1–274 (MSAANADFEL…CSPGIIYRAK (274 aa)) constitute a CheR-type methyltransferase domain. Residues Asn72, Thr74, Arg78, Glu115, Asp144, 200 to 201 (NL), and 217 to 218 (RN) each bind S-adenosyl-L-methionine.

The catalysed reaction is L-glutamyl-[protein] + S-adenosyl-L-methionine = [protein]-L-glutamate 5-O-methyl ester + S-adenosyl-L-homocysteine. In terms of biological role, methylation of the membrane-bound methyl-accepting chemotaxis proteins (MCP) to form gamma-glutamyl methyl ester residues in MCP. The protein is Chemotaxis protein methyltransferase 1 (cheR1) of Pseudomonas aeruginosa (strain ATCC 15692 / DSM 22644 / CIP 104116 / JCM 14847 / LMG 12228 / 1C / PRS 101 / PAO1).